The chain runs to 48 residues: Sulfide dehydrogenase [flavocytochrome c] flavoprotein chain (48 aa).

40–46 lines the FAD pocket; the sequence is VTCPFSN.

As to quaternary structure, dimer of one cytochrome and one flavoprotein.

It localises to the periplasm. It catalyses the reaction hydrogen sulfide + 2 Fe(III)-[cytochrome c] = sulfur + 2 Fe(II)-[cytochrome c] + H(+). The protein is Sulfide dehydrogenase [flavocytochrome c] flavoprotein chain of Chlorobaculum thiosulfatiphilum (Chlorobium limicola f.sp. thiosulfatophilum).